The sequence spans 447 residues: Phosphoglucosamine mutase (447 aa).

The active-site Phosphoserine intermediate is the serine 102. Mg(2+) contacts are provided by serine 102, aspartate 241, aspartate 243, and aspartate 245. At serine 102 the chain carries Phosphoserine.

It belongs to the phosphohexose mutase family. Mg(2+) is required as a cofactor. Post-translationally, activated by phosphorylation.

It carries out the reaction alpha-D-glucosamine 1-phosphate = D-glucosamine 6-phosphate. Its function is as follows. Catalyzes the conversion of glucosamine-6-phosphate to glucosamine-1-phosphate. This is Phosphoglucosamine mutase from Ruegeria sp. (strain TM1040) (Silicibacter sp.).